The primary structure comprises 309 residues: Flavonol sulfotransferase-like (309 aa).

Residue Lys59–Trp64 participates in 3'-phosphoadenylyl sulfate binding. The Proton acceptor role is filled by His119. 3'-phosphoadenylyl sulfate is bound by residues Arg141, Ser149, Tyr207, and Arg274–Gly276.

This sequence belongs to the sulfotransferase 1 family.

It is found in the cytoplasm. The chain is Flavonol sulfotransferase-like from Flaveria bidentis (Coastal plain yellowtops).